Consider the following 478-residue polypeptide: Glycogen synthase (478 aa).

Lys15 contacts ADP-alpha-D-glucose.

The protein belongs to the glycosyltransferase 1 family. Bacterial/plant glycogen synthase subfamily.

The catalysed reaction is [(1-&gt;4)-alpha-D-glucosyl](n) + ADP-alpha-D-glucose = [(1-&gt;4)-alpha-D-glucosyl](n+1) + ADP + H(+). It participates in glycan biosynthesis; glycogen biosynthesis. Synthesizes alpha-1,4-glucan chains using ADP-glucose. This chain is Glycogen synthase, found in Caldicellulosiruptor bescii (strain ATCC BAA-1888 / DSM 6725 / KCTC 15123 / Z-1320) (Anaerocellum thermophilum).